We begin with the raw amino-acid sequence, 144 residues long: Putative pre-16S rRNA nuclease (144 aa).

The protein belongs to the YqgF nuclease family.

It is found in the cytoplasm. Its function is as follows. Could be a nuclease involved in processing of the 5'-end of pre-16S rRNA. This chain is Putative pre-16S rRNA nuclease, found in Wigglesworthia glossinidia brevipalpis.